Here is a 156-residue protein sequence, read N- to C-terminus: Cytochrome c-type biogenesis protein CcmE (156 aa).

The Cytoplasmic portion of the chain corresponds to 1 to 8; the sequence is MNPLRRKR. Residues 9 to 29 traverse the membrane as a helical; Signal-anchor for type II membrane protein segment; the sequence is LLIILAILAGVGIAVGLAMSA. The Periplasmic segment spans residues 30-156; the sequence is LRENINLFYT…RIRSLPRRAK (127 aa). The heme site is built by His-124 and Tyr-128.

Belongs to the CcmE/CycJ family.

It localises to the cell inner membrane. Functionally, heme chaperone required for the biogenesis of c-type cytochromes. Transiently binds heme delivered by CcmC and transfers the heme to apo-cytochromes in a process facilitated by CcmF and CcmH. This chain is Cytochrome c-type biogenesis protein CcmE, found in Pseudomonas fluorescens.